The chain runs to 175 residues: tRNA-acetylating toxin 3 (175 aa).

Acetyl-CoA-binding residues include Leu95, Val97, Gly103, Gly105, Gly107, Ala108, Asp133, Gln138, Asp141, and Trp142. Tyr143 is a catalytic residue. Acetyl-CoA is bound by residues Gly145 and Phe146.

The protein belongs to the acetyltransferase family. GNAT subfamily. Homodimer (in absence of antitoxin); has a condensed and elongated form. Forms a complex with cognate antitoxin TacA3. Forms a 4:2 antitoxin:toxin complex with cognate antitoxin TacA3. Forms a 4:4 antitoxin:toxin complex with promoter DNA, where 2 TacT3 dimers bridge 2 TacA3 dimers. Only TacA3 contacts promoter DNA in the octomeric form. TacT3 may contact DNA in the hexameric form.

It carries out the reaction glycyl-tRNA(Gly) + acetyl-CoA = N-acetylglycyl-tRNA(Gly) + CoA + H(+). Functionally, toxic component of a type II toxin-antitoxin (TA) system. Acetylates tRNA and inhibits translation. Acetylates only Gly-tRNA on all 3 Gly-tRNA(Gly) isoacceptors in situ. In vitro acetylates mainly Ile/Leu and Gly. Overexpression during the lag phase of a tacA3-tacT3 deletion strain leads to a 150-fold increase in persister cells in the presence of cefotaxime and a non-growth state in the absence of antibiotic. Persister cell formation and the growth defect are neutralized by cognate antitoxin TacA3, but not by TacA1 or TacA2. Plays a role in persister cell formation. Its function is as follows. The TacA3-TacT3 complex both represses and derepresses expression of its own operon. The hexameric 4:2 TacA3-TacT3 complex binds promoter DNA and represses its transcription; both subunits are required. The octomeric 4:4 TacA3-TacT3 complex derepresses the operon. The shift from hexameric to octomeric complex probably alters DNA-binding, leading to dissociation from the operator DNA and derepression. In Salmonella typhimurium (strain 14028s / SGSC 2262), this protein is tRNA-acetylating toxin 3.